The sequence spans 368 residues: Phosphoribosylformylglycinamidine cyclo-ligase (368 aa).

It belongs to the AIR synthase family.

It is found in the cytoplasm. The catalysed reaction is 2-formamido-N(1)-(5-O-phospho-beta-D-ribosyl)acetamidine + ATP = 5-amino-1-(5-phospho-beta-D-ribosyl)imidazole + ADP + phosphate + H(+). It functions in the pathway purine metabolism; IMP biosynthesis via de novo pathway; 5-amino-1-(5-phospho-D-ribosyl)imidazole from N(2)-formyl-N(1)-(5-phospho-D-ribosyl)glycinamide: step 2/2. The chain is Phosphoribosylformylglycinamidine cyclo-ligase from Novosphingobium aromaticivorans (strain ATCC 700278 / DSM 12444 / CCUG 56034 / CIP 105152 / NBRC 16084 / F199).